Reading from the N-terminus, the 316-residue chain is tRNA dimethylallyltransferase (316 aa).

An ATP-binding site is contributed by 17–24 (GPTASGKT). A substrate-binding site is contributed by 19–24 (TASGKT). Interaction with substrate tRNA stretches follow at residues 42–45 (DSAL), 166–170 (QRLSR), 247–252 (RCVGYR), and 280–287 (KRQITWLR).

This sequence belongs to the IPP transferase family. As to quaternary structure, monomer. Requires Mg(2+) as cofactor.

It catalyses the reaction adenosine(37) in tRNA + dimethylallyl diphosphate = N(6)-dimethylallyladenosine(37) in tRNA + diphosphate. Catalyzes the transfer of a dimethylallyl group onto the adenine at position 37 in tRNAs that read codons beginning with uridine, leading to the formation of N6-(dimethylallyl)adenosine (i(6)A). The protein is tRNA dimethylallyltransferase of Cronobacter sakazakii (strain ATCC BAA-894) (Enterobacter sakazakii).